A 734-amino-acid chain; its full sequence is Photosystem I P700 chlorophyll a apoprotein A2 (734 aa).

8 consecutive transmembrane segments (helical) span residues 46-69, 135-158, 175-199, 273-291, 330-353, 369-395, 417-439, and 517-535; these read IFAS…FHVA, LYTG…LHLQ, LNHH…HVAI, MAHH…GHMY, IHFQ…QHMY, AALY…IFFI, AIIS…LYVH, and FLVH…LILV. [4Fe-4S] cluster is bound by residues C559 and C568. The next 2 helical transmembrane spans lie at 575 to 596 and 643 to 665; these read AFYL…YWHW and LSVW…MFLI. Chlorophyll a contacts are provided by H654, M662, and Y670. W671 is a binding site for phylloquinone. Residues 707–727 traverse the membrane as a helical segment; it reads LVGLAHFSVGYIFTYAAFLIA.

It belongs to the PsaA/PsaB family. The PsaA/B heterodimer binds the P700 chlorophyll special pair and subsequent electron acceptors. PSI consists of a core antenna complex that captures photons, and an electron transfer chain that converts photonic excitation into a charge separation. The eukaryotic PSI reaction center is composed of at least 11 subunits. Requires P700 is a chlorophyll a/chlorophyll a' dimer, A0 is one or more chlorophyll a, A1 is one or both phylloquinones and FX is a shared 4Fe-4S iron-sulfur center. as cofactor.

It localises to the plastid. Its subcellular location is the chloroplast thylakoid membrane. The catalysed reaction is reduced [plastocyanin] + hnu + oxidized [2Fe-2S]-[ferredoxin] = oxidized [plastocyanin] + reduced [2Fe-2S]-[ferredoxin]. Functionally, psaA and PsaB bind P700, the primary electron donor of photosystem I (PSI), as well as the electron acceptors A0, A1 and FX. PSI is a plastocyanin-ferredoxin oxidoreductase, converting photonic excitation into a charge separation, which transfers an electron from the donor P700 chlorophyll pair to the spectroscopically characterized acceptors A0, A1, FX, FA and FB in turn. Oxidized P700 is reduced on the lumenal side of the thylakoid membrane by plastocyanin. The sequence is that of Photosystem I P700 chlorophyll a apoprotein A2 from Lepidium virginicum (Virginia pepperweed).